Reading from the N-terminus, the 119-residue chain is Protein Wnt-4 (119 aa).

Ser-1 is lipidated: O-palmitoleoyl serine; by PORCN. Disulfide bonds link Cys-69–Cys-100 and Cys-85–Cys-95. N-linked (GlcNAc...) asparagine glycosylation is present at Asn-86.

This sequence belongs to the Wnt family. In terms of processing, palmitoleoylation is required for efficient binding to frizzled receptors. Depalmitoleoylation leads to Wnt signaling pathway inhibition.

It localises to the secreted. It is found in the extracellular space. Its subcellular location is the extracellular matrix. In terms of biological role, ligand for members of the frizzled family of seven transmembrane receptors. Plays an important role in embryonic development. The polypeptide is Protein Wnt-4 (WNT-4) (Eptatretus stoutii (Pacific hagfish)).